Reading from the N-terminus, the 399-residue chain is 1-deoxy-D-xylulose 5-phosphate reductoisomerase (399 aa).

Residues Thr13, Gly14, Ser15, Ile16, and Asn127 each contribute to the NADPH site. Lys128 is a binding site for 1-deoxy-D-xylulose 5-phosphate. Glu129 is a binding site for NADPH. A Mn(2+)-binding site is contributed by Asp153. Residues Ser154, Glu155, Ser187, and His210 each coordinate 1-deoxy-D-xylulose 5-phosphate. Glu155 provides a ligand contact to Mn(2+). Position 216 (Gly216) interacts with NADPH. 1-deoxy-D-xylulose 5-phosphate is bound by residues Ser223, Asn228, Lys229, and Glu232. Glu232 is a binding site for Mn(2+).

The protein belongs to the DXR family. Requires Mg(2+) as cofactor. The cofactor is Mn(2+).

The catalysed reaction is 2-C-methyl-D-erythritol 4-phosphate + NADP(+) = 1-deoxy-D-xylulose 5-phosphate + NADPH + H(+). It functions in the pathway isoprenoid biosynthesis; isopentenyl diphosphate biosynthesis via DXP pathway; isopentenyl diphosphate from 1-deoxy-D-xylulose 5-phosphate: step 1/6. Functionally, catalyzes the NADPH-dependent rearrangement and reduction of 1-deoxy-D-xylulose-5-phosphate (DXP) to 2-C-methyl-D-erythritol 4-phosphate (MEP). This chain is 1-deoxy-D-xylulose 5-phosphate reductoisomerase, found in Bordetella parapertussis (strain 12822 / ATCC BAA-587 / NCTC 13253).